The chain runs to 258 residues: Phosphate import ATP-binding protein PstB (258 aa).

One can recognise an ABC transporter domain in the interval 12-253 (IEVKNLNFYY…PARKETEDYI (242 aa)). Position 44–51 (44–51 (GPSGCGKS)) interacts with ATP.

It belongs to the ABC transporter superfamily. Phosphate importer (TC 3.A.1.7) family. As to quaternary structure, the complex is composed of two ATP-binding proteins (PstB), two transmembrane proteins (PstC and PstA) and a solute-binding protein (PstS).

The protein resides in the cell inner membrane. It catalyses the reaction phosphate(out) + ATP + H2O = ADP + 2 phosphate(in) + H(+). Functionally, part of the ABC transporter complex PstSACB involved in phosphate import. Responsible for energy coupling to the transport system. In Bordetella avium (strain 197N), this protein is Phosphate import ATP-binding protein PstB.